We begin with the raw amino-acid sequence, 137 residues long: Small ribosomal subunit protein uS12 (137 aa).

The protein belongs to the universal ribosomal protein uS12 family. As to quaternary structure, part of the 30S ribosomal subunit. Contacts proteins S8 and S17. May interact with IF1 in the 30S initiation complex.

In terms of biological role, with S4 and S5 plays an important role in translational accuracy. Functionally, interacts with and stabilizes bases of the 16S rRNA that are involved in tRNA selection in the A site and with the mRNA backbone. Located at the interface of the 30S and 50S subunits, it traverses the body of the 30S subunit contacting proteins on the other side and probably holding the rRNA structure together. The combined cluster of proteins S8, S12 and S17 appears to hold together the shoulder and platform of the 30S subunit. The polypeptide is Small ribosomal subunit protein uS12 (Lactiplantibacillus plantarum (strain ATCC BAA-793 / NCIMB 8826 / WCFS1) (Lactobacillus plantarum)).